Here is a 143-residue protein sequence, read N- to C-terminus: Large ribosomal subunit protein uL11 (143 aa).

The protein belongs to the universal ribosomal protein uL11 family. In terms of assembly, part of the ribosomal stalk of the 50S ribosomal subunit. Interacts with L10 and the large rRNA to form the base of the stalk. L10 forms an elongated spine to which L12 dimers bind in a sequential fashion forming a multimeric L10(L12)X complex. In terms of processing, one or more lysine residues are methylated.

Functionally, forms part of the ribosomal stalk which helps the ribosome interact with GTP-bound translation factors. This chain is Large ribosomal subunit protein uL11, found in Paenarthrobacter aurescens (strain TC1).